The chain runs to 307 residues: Probable rRNA-processing protein EBP2 homolog (307 aa).

Disordered stretches follow at residues 1 to 22, 189 to 208, and 236 to 307; these read MSDF…SDAE, QRKM…EAEK, and ESKQ…KGRK. Residues 205–252 adopt a coiled-coil conformation; the sequence is EAEKKDMLDKLKKFRKGKLKNLDFLEDAKALESKQKQSAENRKKRNKK. A compositionally biased stretch (basic and acidic residues) spans 236–245; sequence ESKQKQSAEN. Basic residues-rich tracts occupy residues 246–266 and 294–307; these read RKKR…KRNT and RLGK…KGRK.

The protein belongs to the EBP2 family.

It localises to the nucleus. The protein resides in the nucleolus. Required for the processing of the 27S pre-rRNA. The sequence is that of Probable rRNA-processing protein EBP2 homolog from Drosophila melanogaster (Fruit fly).